The sequence spans 434 residues: Histidinol dehydrogenase (434 aa).

NAD(+) is bound by residues Tyr130, Gln191, and Asn214. The substrate site is built by Ser237, Gln259, and His262. Zn(2+) contacts are provided by Gln259 and His262. Catalysis depends on proton acceptor residues Glu327 and His328. Substrate-binding residues include His328, Asp361, Glu415, and His420. Asp361 lines the Zn(2+) pocket. Position 420 (His420) interacts with Zn(2+).

The protein belongs to the histidinol dehydrogenase family. Requires Zn(2+) as cofactor.

The enzyme catalyses L-histidinol + 2 NAD(+) + H2O = L-histidine + 2 NADH + 3 H(+). It functions in the pathway amino-acid biosynthesis; L-histidine biosynthesis; L-histidine from 5-phospho-alpha-D-ribose 1-diphosphate: step 9/9. Catalyzes the sequential NAD-dependent oxidations of L-histidinol to L-histidinaldehyde and then to L-histidine. The polypeptide is Histidinol dehydrogenase (Rhizobium meliloti (strain 1021) (Ensifer meliloti)).